The chain runs to 320 residues: Beta-sarcoglycan (320 aa).

A compositionally biased stretch (low complexity) spans 1-10 (MAAAAAAAAA). The segment at 1–34 (MAAAAAAAAATEQQSSNGPVKKSMREKAVERRNV) is disordered. Residues 1 to 67 (MAAAAAAAAA…GLRGRKGNLA (67 aa)) lie on the Cytoplasmic side of the membrane. Over residues 23–34 (SMREKAVERRNV) the composition is skewed to basic and acidic residues. A helical; Signal-anchor for type II membrane protein transmembrane segment spans residues 68-88 (ICVIVLLFILAVINLLITLVI). Residues 89–320 (WAVIRIGPNG…VADNPCGNTH (232 aa)) are Extracellular-facing. N-linked (GlcNAc...) asparagine glycans are attached at residues Asn160, Asn213, and Asn260. 2 cysteine pairs are disulfide-bonded: Cys290–Cys316 and Cys292–Cys309.

It belongs to the sarcoglycan beta/delta/gamma/zeta family. Cross-link to form 2 major subcomplexes: one consisting of SGCB, SGCD and SGCG and the other consisting of SGCB and SGCD. The association between SGCB and SGCG is particularly strong while SGCA is loosely associated with the other sarcoglycans. In terms of processing, disulfide bonds are present.

It localises to the cell membrane. Its subcellular location is the sarcolemma. The protein localises to the cytoplasm. The protein resides in the cytoskeleton. Its function is as follows. Component of the sarcoglycan complex, a subcomplex of the dystrophin-glycoprotein complex which forms a link between the F-actin cytoskeleton and the extracellular matrix. This chain is Beta-sarcoglycan (SGCB), found in Mesocricetus auratus (Golden hamster).